Here is a 111-residue protein sequence, read N- to C-terminus: Large ribosomal subunit protein uL22 (111 aa).

This sequence belongs to the universal ribosomal protein uL22 family. In terms of assembly, part of the 50S ribosomal subunit.

Its function is as follows. This protein binds specifically to 23S rRNA; its binding is stimulated by other ribosomal proteins, e.g. L4, L17, and L20. It is important during the early stages of 50S assembly. It makes multiple contacts with different domains of the 23S rRNA in the assembled 50S subunit and ribosome. The globular domain of the protein is located near the polypeptide exit tunnel on the outside of the subunit, while an extended beta-hairpin is found that lines the wall of the exit tunnel in the center of the 70S ribosome. The chain is Large ribosomal subunit protein uL22 from Chlamydia caviae (strain ATCC VR-813 / DSM 19441 / 03DC25 / GPIC) (Chlamydophila caviae).